Consider the following 285-residue polypeptide: tRNA pseudouridine synthase A (285 aa).

Aspartate 69 (nucleophile) is an active-site residue. Tyrosine 127 provides a ligand contact to substrate.

Belongs to the tRNA pseudouridine synthase TruA family. As to quaternary structure, homodimer.

The catalysed reaction is uridine(38/39/40) in tRNA = pseudouridine(38/39/40) in tRNA. Its function is as follows. Formation of pseudouridine at positions 38, 39 and 40 in the anticodon stem and loop of transfer RNAs. This Pseudomonas aeruginosa (strain ATCC 15692 / DSM 22644 / CIP 104116 / JCM 14847 / LMG 12228 / 1C / PRS 101 / PAO1) protein is tRNA pseudouridine synthase A.